The primary structure comprises 95 residues: Small ribosomal subunit protein bS21 (95 aa).

The segment at 55 to 95 (RKLARKKMQREGLLPMKPKPVFGAGPGAGRGGPGAGARPPR) is disordered. Residues 78–89 (AGPGAGRGGPGA) show a composition bias toward gly residues.

It belongs to the bacterial ribosomal protein bS21 family.

The sequence is that of Small ribosomal subunit protein bS21 from Nitrobacter hamburgensis (strain DSM 10229 / NCIMB 13809 / X14).